Here is a 957-residue protein sequence, read N- to C-terminus: Thioredoxin domain-containing protein 11 (957 aa).

Gly residues predominate over residues 1–13 (MSECGGRGGGGGS). Positions 1-47 (MSECGGRGGGGGSSSSSDDAEDEGGGGGPAGSGSLSPAPAASSEGRL) are disordered. Over residues 32–44 (SGSLSPAPAASSE) the composition is skewed to low complexity. The helical transmembrane segment at 64–84 (LLCGAVALGCALLLALKFTCS) threads the bilayer. The 123-residue stretch at 91–213 (IPAKPPVSFF…IEKFVRRVMK (123 aa)) folds into the Thioredoxin 1 domain. 2 cysteine pairs are disulfide-bonded: cysteine 441–cysteine 444 and cysteine 691–cysteine 694. In terms of domain architecture, Thioredoxin 2 spans 621–771 (LDPKQALMKF…LLRFILHHSD (151 aa)). Positions 785–889 (AECLQNEAVL…ADASETLLTE (105 aa)) form a coiled coil. Residues 904–925 (LEGRDGADDRVPPSKARSEHPE) show a composition bias toward basic and acidic residues. Residues 904 to 957 (LEGRDGADDRVPPSKARSEHPEPPGAPRLPASTPLPANISSTLASEGSPENRTD) form a disordered region. The span at 941–951 (NISSTLASEGS) shows a compositional bias: polar residues.

This sequence belongs to the protein disulfide isomerase family. As to quaternary structure, interacts with the cytoplasmic part of DUOX1 and DUOX2. Interacts with TPO and CYBA.

It localises to the endoplasmic reticulum membrane. Functionally, may act as a redox regulator involved in DUOX proteins folding. The interaction with DUOX1 and DUOX2 suggest that it belongs to a multiprotein complex constituting the thyroid H(2)O(2) generating system. It is however not sufficient to assist DUOX1 and DUOX2 in H(2)O(2) generation. In Bos taurus (Bovine), this protein is Thioredoxin domain-containing protein 11 (TXNDC11).